A 323-amino-acid chain; its full sequence is UPF0200/UPF0201 protein AF_1395 (323 aa).

Residues 1–185 (MVLEMKVIAF…EKIRQILLKL (185 aa)) are UPF0200. ATP is bound at residue 12-19 (GYPLSGKS). The interval 186-323 (AKNVEIEIRT…GRPVKEIDKL (138 aa)) is UPF0201.

In the N-terminal section; belongs to the UPF0200 family. The protein in the C-terminal section; belongs to the UPF0201 family.

The chain is UPF0200/UPF0201 protein AF_1395 from Archaeoglobus fulgidus (strain ATCC 49558 / DSM 4304 / JCM 9628 / NBRC 100126 / VC-16).